The chain runs to 115 residues: Replication initiation control protein YabA (115 aa).

Zn(2+)-binding residues include histidine 85, cysteine 87, cysteine 101, and cysteine 104.

It belongs to the YabA family. As to quaternary structure, homotetramer. Interacts with both DnaA and DnaN, acting as a bridge between these two proteins. It depends on Zn(2+) as a cofactor.

Its subcellular location is the cytoplasm. It is found in the nucleoid. Involved in control of chromosome replication initiation. Inhibits the cooperative binding of DnaA to the oriC region, thus negatively regulating initiation of chromosome replication. Inhibits the ability of DnaA-ATP to form a helix on DNA; does not disassemble preformed DnaA-DNA helices. Decreases the residence time of DnaA on the chromosome at its binding sites (oriC, replication forks and promoter-binding sites). Tethers DnaA to the replication machinery via the DNA polymerase beta sliding clamp subunit (dnaN). Associates with oriC and other DnaA targets on the chromosome in a DnaA-dependent manner. The protein is Replication initiation control protein YabA of Lactiplantibacillus plantarum (strain ATCC BAA-793 / NCIMB 8826 / WCFS1) (Lactobacillus plantarum).